We begin with the raw amino-acid sequence, 102 residues long: Alpha-ketoglutarate dehydrogenase component 4 (102 aa).

Residue Gly2 is modified to N-acetylglycine. Lys4 carries the N6-succinyllysine modification. Positions 23–70 (KFPNRRDKPKLSASEALGSAALPSHSSAISQHSKGSTSPDLLMHQGPP) are disordered. A compositionally biased stretch (low complexity) spans 33–46 (LSASEALGSAALPS). The segment covering 47-61 (HSSAISQHSKGSTSP) has biased composition (polar residues). Residues Ser48, Ser60, and Ser89 each carry the phosphoserine modification.

Belongs to the alpha-ketoglutarate dehydrogenase component 4 family. In terms of assembly, component of the 2-oxoglutarate dehydrogenase complex (OGDHC), composed of OGDH (2-oxoglutarate dehydrogenase; also called E1 subunit), DLST (dihydrolipoamide succinyltransferase; also called E2 subunit) and DLD (dihydrolipoamide dehydrogenase; also called E3 subunit), and the assembly factor KGD4. Within OGDHC complex, interacts (via N-terminus) with E3 subunit and (via C-terminus) with E2 subunit.

Its subcellular location is the mitochondrion. Molecular adapter that is necessary to form a stable 2-oxoglutarate dehydrogenase enzyme complex (OGDHC). Enables the specific recruitment of E3 subunit to E2 subunit in the 2-oxoglutarate dehydrogenase complex (OGDHC). The chain is Alpha-ketoglutarate dehydrogenase component 4 from Mus musculus (Mouse).